Consider the following 106-residue polypeptide: Large ribosomal subunit protein uL24 (106 aa).

The protein belongs to the universal ribosomal protein uL24 family. As to quaternary structure, part of the 50S ribosomal subunit.

One of two assembly initiator proteins, it binds directly to the 5'-end of the 23S rRNA, where it nucleates assembly of the 50S subunit. Its function is as follows. One of the proteins that surrounds the polypeptide exit tunnel on the outside of the subunit. The sequence is that of Large ribosomal subunit protein uL24 from Laribacter hongkongensis (strain HLHK9).